The following is a 213-amino-acid chain: ATP phosphoribosyltransferase (213 aa).

This sequence belongs to the ATP phosphoribosyltransferase family. Short subfamily. Heteromultimer composed of HisG and HisZ subunits.

It localises to the cytoplasm. It carries out the reaction 1-(5-phospho-beta-D-ribosyl)-ATP + diphosphate = 5-phospho-alpha-D-ribose 1-diphosphate + ATP. Its pathway is amino-acid biosynthesis; L-histidine biosynthesis; L-histidine from 5-phospho-alpha-D-ribose 1-diphosphate: step 1/9. Functionally, catalyzes the condensation of ATP and 5-phosphoribose 1-diphosphate to form N'-(5'-phosphoribosyl)-ATP (PR-ATP). Has a crucial role in the pathway because the rate of histidine biosynthesis seems to be controlled primarily by regulation of HisG enzymatic activity. This chain is ATP phosphoribosyltransferase (hisG), found in Listeria innocua serovar 6a (strain ATCC BAA-680 / CLIP 11262).